Here is a 300-residue protein sequence, read N- to C-terminus: Protoheme IX farnesyltransferase (300 aa).

Transmembrane regions (helical) follow at residues valine 24–valine 44, tryptophan 46–isoleucine 66, proline 94–phenylalanine 114, leucine 118–leucine 138, isoleucine 146–glycine 166, alanine 172–leucine 192, leucine 217–glycine 237, serine 239–tryptophan 259, and isoleucine 278–leucine 298.

The protein belongs to the UbiA prenyltransferase family. Protoheme IX farnesyltransferase subfamily.

It is found in the cell inner membrane. The enzyme catalyses heme b + (2E,6E)-farnesyl diphosphate + H2O = Fe(II)-heme o + diphosphate. Its pathway is porphyrin-containing compound metabolism; heme O biosynthesis; heme O from protoheme: step 1/1. Converts heme B (protoheme IX) to heme O by substitution of the vinyl group on carbon 2 of heme B porphyrin ring with a hydroxyethyl farnesyl side group. This is Protoheme IX farnesyltransferase from Burkholderia cenocepacia (strain HI2424).